A 397-amino-acid polypeptide reads, in one-letter code: Phosphoglycerate kinase (397 aa).

Residues 21–23 (DFN), Arg-37, 60–63 (HLGR), Arg-119, and Arg-152 each bind substrate. ATP contacts are provided by residues Lys-203, Gly-294, Glu-325, and 354-357 (GGDS).

It belongs to the phosphoglycerate kinase family. In terms of assembly, monomer.

The protein localises to the cytoplasm. It catalyses the reaction (2R)-3-phosphoglycerate + ATP = (2R)-3-phospho-glyceroyl phosphate + ADP. It functions in the pathway carbohydrate degradation; glycolysis; pyruvate from D-glyceraldehyde 3-phosphate: step 2/5. The protein is Phosphoglycerate kinase of Pelodictyon phaeoclathratiforme (strain DSM 5477 / BU-1).